Reading from the N-terminus, the 249-residue chain is Galactan endo-beta-1,3-galactanase (249 aa).

An N-terminal signal peptide occupies residues 1 to 21 (MKLFVVLACLAAPGTFPFVDA). The GH16 domain occupies 34 to 247 (STYWNNFYPW…KARNVQVTRT (214 aa)). Asparagine 48 carries an N-linked (GlcNAc...) asparagine glycan. The active-site Nucleophile is the glutamate 138. Glutamate 143 acts as the Proton donor in catalysis. N-linked (GlcNAc...) asparagine glycosylation occurs at asparagine 156.

It belongs to the glycosyl hydrolase 16 family. Post-translationally, N-glycosylated.

It catalyses the reaction The enzyme specifically hydrolyzes beta-1,3-galactan and beta-1,3-galactooligosaccharides.. Specifically hydrolyzes beta-1,3-galactan in an endo-fashion. Requires at least 3 contiguous beta-1,3-residues. The chain is Galactan endo-beta-1,3-galactanase (EN3GAL) from Flammulina velutipes (Agaricus velutipes).